Reading from the N-terminus, the 200-residue chain is Transcription elongation factor A protein-like 6 (200 aa).

The tract at residues Met-1–Leu-200 is disordered. Over residues Asp-20–Pro-36 the composition is skewed to acidic residues. Phosphoserine is present on Ser-30. 3 stretches are compositionally biased toward basic and acidic residues: residues Asp-37–Gly-52, Leu-60–Gly-80, and Asp-115–Arg-154. A Phosphoserine modification is found at Ser-65.

The protein belongs to the TFS-II family. TFA subfamily.

The protein resides in the nucleus. Functionally, may be involved in transcriptional regulation. This is Transcription elongation factor A protein-like 6 (TCEAL6) from Homo sapiens (Human).